The primary structure comprises 205 residues: N-(5'-phosphoribosyl)anthranilate isomerase (205 aa).

It belongs to the TrpF family.

It carries out the reaction N-(5-phospho-beta-D-ribosyl)anthranilate = 1-(2-carboxyphenylamino)-1-deoxy-D-ribulose 5-phosphate. Its pathway is amino-acid biosynthesis; L-tryptophan biosynthesis; L-tryptophan from chorismate: step 3/5. The polypeptide is N-(5'-phosphoribosyl)anthranilate isomerase (TRP1) (Zygosaccharomyces bailii).